Here is a 494-residue protein sequence, read N- to C-terminus: Chromosomal replication initiator protein DnaA (494 aa).

The tract at residues 1–103 (MTNIGGPVVE…LRVEVIVRGM (103 aa)) is domain I, interacts with DnaA modulators. Residues 103–148 (MKRVSKGVVCRTSAAPVVLEGQTASSFVESYTEPSVKDIEAGVFGS) are domain II. The interval 149–371 (PLDSRYTFES…GAFNQLLFRQ (223 aa)) is domain III, AAA+ region. Residues glycine 195, glycine 197, lysine 198, and threonine 199 each contribute to the ATP site. Residues 372-494 (SFESDLSLER…LKRLIGEQAA (123 aa)) are domain IV, binds dsDNA.

It belongs to the DnaA family. In terms of assembly, oligomerizes as a right-handed, spiral filament on DNA at oriC.

The protein resides in the cytoplasm. Functionally, plays an essential role in the initiation and regulation of chromosomal replication. ATP-DnaA binds to the origin of replication (oriC) to initiate formation of the DNA replication initiation complex once per cell cycle. Binds the DnaA box (a 9 base pair repeat at the origin) and separates the double-stranded (ds)DNA. Forms a right-handed helical filament on oriC DNA; dsDNA binds to the exterior of the filament while single-stranded (ss)DNA is stabiized in the filament's interior. The ATP-DnaA-oriC complex binds and stabilizes one strand of the AT-rich DNA unwinding element (DUE), permitting loading of DNA polymerase. After initiation quickly degrades to an ADP-DnaA complex that is not apt for DNA replication. Binds acidic phospholipids. The sequence is that of Chromosomal replication initiator protein DnaA from Bartonella quintana (strain Toulouse) (Rochalimaea quintana).